The primary structure comprises 358 residues: Tyrosinase ustQ (358 aa).

N-linked (GlcNAc...) asparagine glycosylation occurs at N28. A helical transmembrane segment spans residues 37 to 57 (FVPVYAGLTIISLITVTVSLV). 2 N-linked (GlcNAc...) asparagine glycosylation sites follow: N91 and N109. Cu cation-binding residues include H128 and H137. N-linked (GlcNAc...) asparagine glycans are attached at residues N172 and N214. 3 residues coordinate Cu cation: H266, H270, and H292. 2 N-linked (GlcNAc...) asparagine glycosylation sites follow: N321 and N325.

The protein belongs to the tyrosinase family. It depends on Cu(2+) as a cofactor.

The protein localises to the membrane. It catalyses the reaction 2 L-dopa + O2 = 2 L-dopaquinone + 2 H2O. The catalysed reaction is L-tyrosine + O2 = L-dopaquinone + H2O. Its pathway is mycotoxin biosynthesis. Functionally, tyrosinase; part of the gene cluster that mediates the biosynthesis of the secondary metabolite ustiloxin B, an antimitotic tetrapeptide. First, ustA is processed by the subtilisin-like endoprotease Kex2 that is outside the ustiloxin B gene cluster, at the C-terminal side of Arg-Lys, after transfer to Golgi apparatus through the endoplasmic reticulum (ER). Cleavage by KEX2 generates 16 peptides YAIG-I to YAIG-XVI. To process the precursor peptide further, at least two peptidases are necessary to cleave the N-terminal and C-terminal sides of the Tyr-Ala-Ile-Gly core peptide which serves as backbone for the synthesis of ustiloxin B, through cyclization and modification of the tyrosine with a non-protein coding amino acid, norvaline. One of the two peptidases must be the serine peptidase ustP; and the other pepdidase is probably ustH. Macrocyclization of the core peptide derived from ustA requires the tyrosinase ustQ, as well as the homologous oxidases ustYa and ustYb, and leads to the production of the first cyclization product N-desmethylustiloxin F. For the formation of N-desmethylustiloxin F, three oxidation steps are required, hydroxylation at the benzylic position, hydroxylation at either the aromatic ring of Tyr or beta-position of Ile, and oxidative cyclization. UstQ may catalyze the oxidation of a phenol moiety, whereas the ustYa and ustYb are most likely responsible for the remaining two-step oxidations. N-desmethylustiloxin F is then methylated by ustM to yield ustiloxin F which in turn substrate of the cytochrome P450 monooxygenase ustC which catalyzes the formation of S-deoxyustiloxin H. The flavoprotein monooxygenases ustF1 and ustF2 then participate in the modification of the side chain of S-deoxyustiloxin H, leading to the synthesis of an oxime intermediate, via ustiloxin H. Finally, carboxylative dehydration performed by the cysteine desulfurase-like protein ustD yields ustiloxin B. In Aspergillus flavus (strain ATCC 200026 / FGSC A1120 / IAM 13836 / NRRL 3357 / JCM 12722 / SRRC 167), this protein is Tyrosinase ustQ.